Reading from the N-terminus, the 194-residue chain is dCTP deaminase (194 aa).

Residues 110 to 115, Asp-128, 136 to 138, Tyr-171, Lys-178, and Gln-182 contribute to the dCTP site; these read RSSLAR and VLE. Glu-138 functions as the Proton donor/acceptor in the catalytic mechanism.

The protein belongs to the dCTP deaminase family. As to quaternary structure, homotrimer.

It catalyses the reaction dCTP + H2O + H(+) = dUTP + NH4(+). Its pathway is pyrimidine metabolism; dUMP biosynthesis; dUMP from dCTP (dUTP route): step 1/2. In terms of biological role, catalyzes the deamination of dCTP to dUTP. In Psychromonas ingrahamii (strain DSM 17664 / CCUG 51855 / 37), this protein is dCTP deaminase.